We begin with the raw amino-acid sequence, 757 residues long: Cellulose synthase-like protein B1 (757 aa).

The next 2 helical transmembrane spans lie at Thr-18–Leu-38 and Val-50–Cys-70. The active site involves Asp-136. A coiled-coil region spans residues Glu-186–Asp-216. Residue Asp-462 is part of the active site. A run of 6 helical transmembrane segments spans residues Leu-533–Leu-553, Leu-569–Phe-589, Leu-615–Ile-635, Phe-674–Gly-694, Ala-710–Phe-730, and Thr-737–Val-757.

This sequence belongs to the glycosyltransferase 2 family. Plant cellulose synthase-like B subfamily. In terms of tissue distribution, expressed in young seedlings, primarily in the vascular tissue.

It is found in the golgi apparatus membrane. Functionally, thought to be a Golgi-localized beta-glycan synthase that polymerize the backbones of noncellulosic polysaccharides (hemicelluloses) of plant cell wall. In Arabidopsis thaliana (Mouse-ear cress), this protein is Cellulose synthase-like protein B1 (CSLB1).